A 373-amino-acid polypeptide reads, in one-letter code: Peptide chain release factor subunit 1 (373 aa).

This sequence belongs to the eukaryotic release factor 1 family. Heterodimer of two subunits, one of which binds GTP.

It localises to the cytoplasm. Directs the termination of nascent peptide synthesis (translation) in response to the termination codons UAA, UAG and UGA. This Aeropyrum pernix (strain ATCC 700893 / DSM 11879 / JCM 9820 / NBRC 100138 / K1) protein is Peptide chain release factor subunit 1 (prf1).